A 269-amino-acid chain; its full sequence is 3-methyl-2-oxobutanoate hydroxymethyltransferase (269 aa).

Mg(2+) is bound by residues D48 and D87. Residues 48–49, D87, and K117 contribute to the 3-methyl-2-oxobutanoate site; that span reads DS. E119 lines the Mg(2+) pocket. The active-site Proton acceptor is the E186.

Belongs to the PanB family. In terms of assembly, homodecamer; pentamer of dimers. Mg(2+) serves as cofactor.

It is found in the cytoplasm. The enzyme catalyses 3-methyl-2-oxobutanoate + (6R)-5,10-methylene-5,6,7,8-tetrahydrofolate + H2O = 2-dehydropantoate + (6S)-5,6,7,8-tetrahydrofolate. It participates in cofactor biosynthesis; (R)-pantothenate biosynthesis; (R)-pantoate from 3-methyl-2-oxobutanoate: step 1/2. Catalyzes the reversible reaction in which hydroxymethyl group from 5,10-methylenetetrahydrofolate is transferred onto alpha-ketoisovalerate to form ketopantoate. This Moorella thermoacetica (strain ATCC 39073 / JCM 9320) protein is 3-methyl-2-oxobutanoate hydroxymethyltransferase.